The following is a 95-amino-acid chain: Phosphoribosyl-ATP pyrophosphatase (95 aa).

This sequence belongs to the PRA-PH family.

It localises to the cytoplasm. The enzyme catalyses 1-(5-phospho-beta-D-ribosyl)-ATP + H2O = 1-(5-phospho-beta-D-ribosyl)-5'-AMP + diphosphate + H(+). It participates in amino-acid biosynthesis; L-histidine biosynthesis; L-histidine from 5-phospho-alpha-D-ribose 1-diphosphate: step 2/9. This Halobacterium salinarum (strain ATCC 29341 / DSM 671 / R1) protein is Phosphoribosyl-ATP pyrophosphatase.